The chain runs to 273 residues: Tyrosinase (273 aa).

An N-terminal signal peptide occupies residues 1-18 (MCLLALGFLLGILQPASG). N-linked (GlcNAc...) asparagine glycosylation is found at asparagine 86 and asparagine 169. Residues histidine 180, histidine 202, and histidine 211 each coordinate Cu cation. The N-linked (GlcNAc...) asparagine glycan is linked to asparagine 230.

It belongs to the tyrosinase family. Cu(2+) serves as cofactor.

The protein resides in the melanosome membrane. It carries out the reaction 2 L-dopa + O2 = 2 L-dopaquinone + 2 H2O. The catalysed reaction is L-tyrosine + O2 = L-dopaquinone + H2O. In terms of biological role, this is a copper-containing oxidase that functions in the formation of pigments such as melanins and other polyphenolic compounds. The polypeptide is Tyrosinase (TYR) (Pelodiscus sinensis (Chinese softshell turtle)).